The chain runs to 175 residues: Adenine phosphoribosyltransferase (175 aa).

Belongs to the purine/pyrimidine phosphoribosyltransferase family. Homodimer.

The protein localises to the cytoplasm. The catalysed reaction is AMP + diphosphate = 5-phospho-alpha-D-ribose 1-diphosphate + adenine. The protein operates within purine metabolism; AMP biosynthesis via salvage pathway; AMP from adenine: step 1/1. Functionally, catalyzes a salvage reaction resulting in the formation of AMP, that is energically less costly than de novo synthesis. This Lactobacillus johnsonii (strain CNCM I-12250 / La1 / NCC 533) protein is Adenine phosphoribosyltransferase.